Consider the following 363-residue polypeptide: MAGSSIGECFRVSTFGESHGPAIGCIVDGCPPGMTLSAADIQTELDRRRPGRSRHTTQRQEADQVEILSGVFEGLTTGTPIGLLIRNTDQRSQDYSKIKDLFRPGHADYTYLQKYGLRDYRGGGRSSARETAMRVAAGAIARKFLRERLGVNIQAWMAQMGPIHAEDFDAAEISHNDFFCPDAGAAIRMADFLDGLRKEGDSIGARVDARVSGMPVGLGEPVFDRLEADIAKAMMSINAVKAIAVGDGFAVVEQRGSYHGDAMAATGFQSNHAGGVLGGISSGQDLTLSVAIKPTSSIRIPRQSIDVHGRPAEVITTGRHDPCVGIRAVPIVEAMLALVIMDHWMRHRAQNADVQAPLPPIPA.

2 residues coordinate NADP(+): arginine 48 and arginine 54. FMN is bound by residues 125-127, 238-239, glycine 278, 293-297, and arginine 319; these read RSS, NA, and KPTSS.

This sequence belongs to the chorismate synthase family. As to quaternary structure, homotetramer. It depends on FMNH2 as a cofactor.

The enzyme catalyses 5-O-(1-carboxyvinyl)-3-phosphoshikimate = chorismate + phosphate. The protein operates within metabolic intermediate biosynthesis; chorismate biosynthesis; chorismate from D-erythrose 4-phosphate and phosphoenolpyruvate: step 7/7. Catalyzes the anti-1,4-elimination of the C-3 phosphate and the C-6 proR hydrogen from 5-enolpyruvylshikimate-3-phosphate (EPSP) to yield chorismate, which is the branch point compound that serves as the starting substrate for the three terminal pathways of aromatic amino acid biosynthesis. This reaction introduces a second double bond into the aromatic ring system. This is Chorismate synthase from Acidithiobacillus ferrooxidans (strain ATCC 23270 / DSM 14882 / CIP 104768 / NCIMB 8455) (Ferrobacillus ferrooxidans (strain ATCC 23270)).